The sequence spans 1136 residues: Tyrosine-protein kinase receptor Tie-1 (1136 aa).

An N-terminal signal peptide occupies residues 1–23 (MVWLEPPLLLPIFFLASHVGAAV). Residues 24-757 (DLTLLADLRL…IHAAEEGLDQ (734 aa)) are Extracellular-facing. Residues 43–106 (CVSGEAGAGR…PSDLVGVFSC (64 aa)) form the Ig-like C2-type 1 domain. Residues Asn84 and Asn159 are each glycosylated (N-linked (GlcNAc...) asparagine). EGF-like domains are found at residues 212–254 (GCEA…TRCE), 256–301 (ACRE…SQCQ), and 303–343 (ACAP…MHCE). Disulfide bonds link Cys226/Cys235, Cys229/Cys242, and Cys244/Cys253. Cystine bridges form between Cys317–Cys325, Cys319–Cys331, and Cys333–Cys342. In terms of domain architecture, Ig-like C2-type 2 spans 370-424 (CAAAGNPFPVRGSMELRKPDGTVLLSTKAIVEPDRTTAEFEVPRLALGDSGLWEC). Fibronectin type-III domains lie at 444–543 (PPVP…CPEP), 546–640 (KPWL…LPPS), and 644–737 (APRH…TLGN). N-linked (GlcNAc...) asparagine glycosylation is found at Asn501, Asn594, and Asn707. A helical transmembrane segment spans residues 758–782 (QLVLAVVGSVSATCLTILAALLTLA). The Cytoplasmic segment spans residues 783–1136 (CIRKSCLHRR…AGIDATAEEA (354 aa)). One can recognise a Protein kinase domain in the interval 837–1116 (ITFEDLIGEG…RMLEARKAYV (280 aa)). Residues 843 to 851 (IGEGNFGQV) and Lys868 each bind ATP. Asp977 acts as the Proton acceptor in catalysis. A Phosphotyrosine; by autocatalysis modification is found at Tyr1005.

The protein belongs to the protein kinase superfamily. Tyr protein kinase family. Tie subfamily. Heterodimer with TEK/TIE2. Interacts with SVEP1 (via C-terminus). Post-translationally, phosphorylated on tyrosine residues in response to ANGPT1, most likely by TEK/TIE2. Specifically expressed in developing vascular endothelial cells.

Its subcellular location is the cell membrane. It carries out the reaction L-tyrosyl-[protein] + ATP = O-phospho-L-tyrosyl-[protein] + ADP + H(+). Its function is as follows. Transmembrane tyrosine-protein kinase that may modulate TEK/TIE2 activity and contribute to the regulation of angiogenesis. The protein is Tyrosine-protein kinase receptor Tie-1 (TIE1) of Bos taurus (Bovine).